The primary structure comprises 136 residues: Glutamate-rich protein 4 (136 aa).

Positions 92–136 (EEEEEEEQEEKSCVEENKGPEEKQDEERSRSSYPAQRLPDFGMTI) are disordered. The span at 101–121 (EKSCVEENKGPEEKQDEERSR) shows a compositional bias: basic and acidic residues.

The chain is Glutamate-rich protein 4 (Erich4) from Mus musculus (Mouse).